Reading from the N-terminus, the 185-residue chain is Nodulin-20 (185 aa).

A signal peptide spans 1–17; the sequence is MRVVLITLFLFIGAAVA.

Belongs to the nodulin 20 family.

It is found in the symbiosome. The protein localises to the peribacteroid membrane. It localises to the peribacteroid space. The polypeptide is Nodulin-20 (Glycine max (Soybean)).